A 233-amino-acid polypeptide reads, in one-letter code: Large ribosomal subunit protein uL1 (233 aa).

This sequence belongs to the universal ribosomal protein uL1 family. In terms of assembly, part of the 50S ribosomal subunit.

In terms of biological role, binds directly to 23S rRNA. The L1 stalk is quite mobile in the ribosome, and is involved in E site tRNA release. Functionally, protein L1 is also a translational repressor protein, it controls the translation of the L11 operon by binding to its mRNA. The chain is Large ribosomal subunit protein uL1 from Shewanella baltica (strain OS185).